Consider the following 441-residue polypeptide: Transducin-like enhancer protein 7 (441 aa).

2 disordered regions span residues 1–77 (MSGE…QWHL) and 91–119 (PDAQ…SSSS). Over residues 27–49 (ESSGVSSQPEPQVQQQLGSLLGV) the composition is skewed to low complexity. Over residues 62–76 (PADQETSTVTQQQWH) the composition is skewed to polar residues. Positions 108–119 (GSEVGQPYSSSS) are enriched in low complexity. WD repeat units lie at residues 156–194 (FHGK…AGEK), 204–243 (HPQD…QVRA), 247–285 (STGP…LIRK), 286–325 (HEVP…RLHQ), and 409–441 (EESS…QLLY).

It belongs to the WD repeat Groucho/TLE family.

This Homo sapiens (Human) protein is Transducin-like enhancer protein 7.